The primary structure comprises 583 residues: Nuclear distribution protein nudE homolog 1 (583 aa).

Residues 14-195 (ATLEDTLGWY…QDKFKKQESR (182 aa)) adopt a coiled-coil conformation. Disordered stretches follow at residues 34–68 (LAEF…KAET), 211–339 (TFDG…TSNS), and 358–583 (HSVR…GETY). The segment covering 35–67 (AEFRDSSRELEQELEKDIERAEKQERHHQEKAE) has biased composition (basic and acidic residues). Polar residues-rich tracts occupy residues 219-235 (PGST…TDSK), 279-319 (RSRL…TMRT), 329-339 (SASNKLPTSNS), 379-392 (NVYS…SITI), and 399-422 (SGSA…STPK). The span at 453–469 (RPSSRASTSYATSYARP) shows a compositional bias: low complexity. Polar residues predominate over residues 529 to 538 (RRGTYSSQGG).

It belongs to the nudE family. Self-associates. Interacts with PAC1.

The protein resides in the cytoplasm. It localises to the cytoskeleton. Its function is as follows. Required for nuclear migration. The protein is Nuclear distribution protein nudE homolog 1 (NDE1) of Gibberella zeae (strain ATCC MYA-4620 / CBS 123657 / FGSC 9075 / NRRL 31084 / PH-1) (Wheat head blight fungus).